Reading from the N-terminus, the 147-residue chain is MKEVSVPATKRIALVAHDNRKEDLVSWVKAHREILSKHRLFGTGTTGKLISEETGLPVTRFLSGPLGGDQQIGAKIAEGDLDIVVFFWDPLTAQPHDPDVKALLRIAVLYNVPMACNRSTADYMISSPQFTISYEKVLLNFELLCES.

The 144-residue stretch at Val-4–Ser-147 folds into the MGS-like domain. Residues His-17, Lys-21, Thr-43–Thr-46, and Ser-63–Gly-64 each bind substrate. Catalysis depends on Asp-69, which acts as the Proton donor/acceptor. His-96 lines the substrate pocket.

Belongs to the methylglyoxal synthase family.

The catalysed reaction is dihydroxyacetone phosphate = methylglyoxal + phosphate. Functionally, catalyzes the formation of methylglyoxal from dihydroxyacetone phosphate. The chain is Methylglyoxal synthase from Leptospira borgpetersenii serovar Hardjo-bovis (strain JB197).